The sequence spans 250 residues: uncharacterized protein (250 aa).

A signal peptide spans 1-19 (MAKPRNAAESKAAKAQANA). Transmembrane regions (helical) follow at residues 51-71 (IGAFLLIVGASVGVGVWAGGF) and 73-93 (MFTMIPLGVLLGALVAFVIFG). Positions 226 to 250 (AGVMPKGPLPTTAKMRSVQRTVRRK) are disordered.

The protein resides in the cell membrane. This is an uncharacterized protein from Mycobacterium tuberculosis (strain CDC 1551 / Oshkosh).